A 182-amino-acid chain; its full sequence is Autophagy-related protein 31 (182 aa).

The segment at 105 to 134 (LTSGNDTGGDAGKKSGDISDPAAGPDVPRE) is disordered.

Its subcellular location is the cytoplasm. The protein resides in the cytoskeleton. It is found in the preautophagosomal structure. In terms of biological role, plays a role in starvation-induced autophagy. Involved in mitophagy. Functions with ATG17 and ATG29 at the preautophagosomal structure (PAS) in order to form normal autophagosomes under starvation conditions. May be involved in microtubule function, such as chromosome segregation and karyogamy. This chain is Autophagy-related protein 31 (CIS1), found in Candida glabrata (strain ATCC 2001 / BCRC 20586 / JCM 3761 / NBRC 0622 / NRRL Y-65 / CBS 138) (Yeast).